A 128-amino-acid chain; its full sequence is MYQVMLVALGGAIGSAARFTLSGLVLRYSLDWRFPLPTFTVNIIGCLVIGMLAGLASKEGFISPDMRVLLFTGLVGGFTTFSAFGLETLVLLREGLVGIAAAYIVSSIVVGLVLMWLGFELVKMTMQA.

4 helical membrane-spanning segments follow: residues 6–26 (LVAL…GLVL), 36–56 (LPTF…AGLA), 68–88 (VLLF…GLET), and 99–119 (IAAA…WLGF). Gly76 and Thr79 together coordinate Na(+).

The protein belongs to the fluoride channel Fluc/FEX (TC 1.A.43) family.

The protein resides in the cell inner membrane. It carries out the reaction fluoride(in) = fluoride(out). With respect to regulation, na(+) is not transported, but it plays an essential structural role and its presence is essential for fluoride channel function. Fluoride-specific ion channel. Important for reducing fluoride concentration in the cell, thus reducing its toxicity. This Methylobacillus flagellatus (strain ATCC 51484 / DSM 6875 / VKM B-1610 / KT) protein is Fluoride-specific ion channel FluC.